A 396-amino-acid polypeptide reads, in one-letter code: Putative nickel insertion protein (396 aa).

It belongs to the LarC family.

The protein is Putative nickel insertion protein of Methanosarcina barkeri (strain Fusaro / DSM 804).